Here is a 73-residue protein sequence, read N- to C-terminus: Conotoxin CnIIIG (73 aa).

Residues 1 to 19 (MSKLGVLLTICLLLLPLTA) form the signal peptide. Residues 20–48 (LPMDEDQPADQPADRMQDDISSEQYPLFD) constitute a propeptide that is removed on maturation. The residue at position 51 (Gln-51) is a Pyrrolidone carboxylic acid. Disulfide bonds link Cys-53/Cys-72, Cys-54/Cys-70, and Cys-60/Cys-73.

Belongs to the conotoxin M superfamily. As to expression, expressed by the venom duct.

Its subcellular location is the secreted. In terms of biological role, shows a paralytic effect in fish. This chain is Conotoxin CnIIIG, found in Conus consors (Singed cone).